Consider the following 74-residue polypeptide: Sodium channel neurotoxin MeuNaTxalpha-6 (74 aa).

The signal sequence occupies residues 1–7 (LMTGVES). The LCN-type CS-alpha/beta domain occupies 9–73 (RDAYIAKPHN…VPIRIPGKCH (65 aa)). Intrachain disulfides connect cysteine 19-cysteine 72, cysteine 23-cysteine 45, cysteine 31-cysteine 55, and cysteine 35-cysteine 57. Arginine 74 is a propeptide (removed by a carboxypeptidase).

It belongs to the long (4 C-C) scorpion toxin superfamily. Sodium channel inhibitor family. Alpha subfamily. Expressed by the venom gland.

Its subcellular location is the secreted. Functionally, alpha toxins bind voltage-independently at site-3 of sodium channels (Nav) and inhibit the inactivation of the activated channels, thereby blocking neuronal transmission. The chain is Sodium channel neurotoxin MeuNaTxalpha-6 from Mesobuthus eupeus (Lesser Asian scorpion).